Here is a 103-residue protein sequence, read N- to C-terminus: Large ribosomal subunit protein eL42 (103 aa).

Positions 37 to 56 (GKRRYDRKQSGFGGQTKPVF) are disordered.

This sequence belongs to the eukaryotic ribosomal protein eL42 family.

In Dictyostelium discoideum (Social amoeba), this protein is Large ribosomal subunit protein eL42 (rpl36a).